The primary structure comprises 921 residues: Probable glucan 1,3-alpha-glucosidase (921 aa).

An N-terminal signal peptide occupies residues 1 to 20 (MRSLLFVLSLICFCSQTALS). The active-site Nucleophile is the aspartate 512. The active site involves glutamate 515. Aspartate 588 serves as the catalytic Proton donor. N-linked (GlcNAc...) asparagine glycosylation is found at asparagine 689 and asparagine 804.

The protein belongs to the glycosyl hydrolase 31 family. Heterodimer of a catalytic alpha subunit (PSL5) and a beta subunit (PSL4). As to expression, expressed in roots, rosette leaves, leaf blades, mature stems, cauline leaves, flower buds, flowers and siliques.

It is found in the endoplasmic reticulum. It carries out the reaction Hydrolysis of terminal (1-&gt;3)-alpha-D-glucosidic links in (1-&gt;3)-alpha-D-glucans.. Its pathway is glycan metabolism; N-glycan metabolism. Its function is as follows. Cleaves sequentially the 2 innermost alpha-1,3-linked glucose residues from the Glc(2)Man(9)GlcNAc(2) oligosaccharide precursor of immature glycoproteins. Essential for stable accumulation of the receptor EFR that determines the specific perception of bacterial elongation factor Tu (EF-Tu), a potent elicitor of the defense response to pathogen-associated molecular patterns (PAMPs). Required for sustained activation of EFR-mediated signaling, but not receptor FLS2-mediated signaling elicited by the bacterial flagellin flg22. This Arabidopsis thaliana (Mouse-ear cress) protein is Probable glucan 1,3-alpha-glucosidase (PSL5).